The primary structure comprises 824 residues: Lysine-specific histone demethylase 1B homolog (824 aa).

Positions Met-1–Val-31 are disordered. One can recognise an SWIRM domain in the interval Pro-245–Pro-346. Residues Pro-352–Ile-407, Val-579, Glu-788, and Gln-796–Met-798 contribute to the FAD site.

It belongs to the flavin monoamine oxidase family. The cofactor is FAD. As to expression, in hermaphrodites, expressed in gut cells, embryonic cells and sheath cells. Not expressed in sperm or pharyngeal neurons.

Its subcellular location is the nucleus. The catalysed reaction is N(6),N(6)-dimethyl-L-lysyl(4)-[histone H3] + 2 A + 2 H2O = L-lysyl(4)-[histone H3] + 2 formaldehyde + 2 AH2. In terms of biological role, histone demethylase that demethylates di-methylated 'Lys-4' of histone H3, a specific tag for epigenetic transcriptional activation, thereby acting as a corepressor. Acts by oxidizing the substrate by FAD to generate the corresponding imine that is subsequently hydrolyzed. Plays a role in the mitotic development of the germline. May be involved in H3 demethylation in mitotic cells including gut and embryonic cells. Plays a role in sensitivity upon interstrand cross-link DNA damage, probably by positively regulating the expression of mlh-1. Plays a role in developmental growth and lifespan regulation in response to ultraviolet-induced damage. No obvious role in larval development, sex chromosome segregation or for regulating meiotic crossover frequency. In Caenorhabditis elegans, this protein is Lysine-specific histone demethylase 1B homolog.